Here is a 178-residue protein sequence, read N- to C-terminus: Large ribosomal subunit protein uL10 (178 aa).

This sequence belongs to the universal ribosomal protein uL10 family. As to quaternary structure, part of the ribosomal stalk of the 50S ribosomal subunit. The N-terminus interacts with L11 and the large rRNA to form the base of the stalk. The C-terminus forms an elongated spine to which L12 dimers bind in a sequential fashion forming a multimeric L10(L12)X complex.

Its function is as follows. Forms part of the ribosomal stalk, playing a central role in the interaction of the ribosome with GTP-bound translation factors. This Salinibacter ruber (strain DSM 13855 / M31) protein is Large ribosomal subunit protein uL10.